We begin with the raw amino-acid sequence, 160 residues long: Phosphopantetheine adenylyltransferase (160 aa).

Ser9 lines the substrate pocket. ATP is bound by residues Ser9 to Phe10 and His17. Substrate is bound by residues Lys41, Leu73, and Lys87. Residues Gly88 to Arg90, Glu98, and Tyr123 to Ser129 each bind ATP.

Belongs to the bacterial CoaD family. As to quaternary structure, homohexamer. Mg(2+) is required as a cofactor.

It is found in the cytoplasm. The catalysed reaction is (R)-4'-phosphopantetheine + ATP + H(+) = 3'-dephospho-CoA + diphosphate. It participates in cofactor biosynthesis; coenzyme A biosynthesis; CoA from (R)-pantothenate: step 4/5. Reversibly transfers an adenylyl group from ATP to 4'-phosphopantetheine, yielding dephospho-CoA (dPCoA) and pyrophosphate. The chain is Phosphopantetheine adenylyltransferase from Caldanaerobacter subterraneus subsp. tengcongensis (strain DSM 15242 / JCM 11007 / NBRC 100824 / MB4) (Thermoanaerobacter tengcongensis).